We begin with the raw amino-acid sequence, 214 residues long: Adenylate kinase (214 aa).

Position 10 to 15 (Gly-10 to Thr-15) interacts with ATP. Positions Ser-30 to Val-59 are NMP. AMP-binding positions include Thr-31, Arg-36, Glu-57–Val-59, Gly-85–Arg-88, and Gln-92. Residues Gly-126–Asp-163 are LID. Arg-127 contacts ATP. Residues Cys-130, Cys-133, Cys-150, and Cys-153 each coordinate Zn(2+). AMP-binding residues include Arg-160 and Arg-172. Gly-200 is a binding site for ATP.

This sequence belongs to the adenylate kinase family. In terms of assembly, monomer.

The protein resides in the cytoplasm. The enzyme catalyses AMP + ATP = 2 ADP. It participates in purine metabolism; AMP biosynthesis via salvage pathway; AMP from ADP: step 1/1. Its function is as follows. Catalyzes the reversible transfer of the terminal phosphate group between ATP and AMP. Plays an important role in cellular energy homeostasis and in adenine nucleotide metabolism. The chain is Adenylate kinase from Erythrobacter litoralis (strain HTCC2594).